We begin with the raw amino-acid sequence, 176 residues long: RING-H2 finger protein ATL73 (176 aa).

A signal peptide spans 1 to 16 (MARFLLATQATPTISA). The chain crosses the membrane as a helical span at residues 42–62 (VIILAALLCALICALGINSVL). The segment at 113–155 (CLICLGDFVEGETVRVLPKCNHGFHVKCIDTWLLSHSSCPTCR) adopts an RING-type; atypical zinc-finger fold.

It belongs to the RING-type zinc finger family. ATL subfamily.

The protein localises to the membrane. It carries out the reaction S-ubiquitinyl-[E2 ubiquitin-conjugating enzyme]-L-cysteine + [acceptor protein]-L-lysine = [E2 ubiquitin-conjugating enzyme]-L-cysteine + N(6)-ubiquitinyl-[acceptor protein]-L-lysine.. It functions in the pathway protein modification; protein ubiquitination. This Arabidopsis thaliana (Mouse-ear cress) protein is RING-H2 finger protein ATL73 (ATL73).